Here is a 582-residue protein sequence, read N- to C-terminus: Probable inorganic phosphate transporter 1-9 (582 aa).

Topologically, residues 1–23 (MAPRIRVLAALDQARTQYYHFKA) are cytoplasmic. The chain crosses the membrane as a helical span at residues 24–44 (IVIAGMGLFTDSYDLFCISPV). Topologically, residues 45-75 (MKIFGRVYYAPSGSVDGSGSGPGVTPPAVVS) are extracellular. The helical transmembrane segment at 76 to 96 (ATVGVALLGAVAGNVVFGALG) threads the bilayer. Topologically, residues 97-103 (DRVGRRR) are cytoplasmic. The chain crosses the membrane as a helical span at residues 104–124 (VYGACLLLMVCSSVGSGLSVC). The Extracellular portion of the chain corresponds to 125–130 (RTRRCA). The helical transmembrane segment at 131-151 (LASLCFFRFLLGVGVGGDYPL) threads the bilayer. Residues 152–165 (SATIMSEFANRRTR) lie on the Cytoplasmic side of the membrane. A helical transmembrane segment spans residues 166 to 186 (GAFIAAVFSMQGFGILVSSAV). The Extracellular portion of the chain corresponds to 187–210 (TMAVAAAFDHYTGYPAPLDTPECA). A helical membrane pass occupies residues 211–231 (DLAWRIILMAGAVPAALTYYW). The Cytoplasmic segment spans residues 232–307 (RMSMPETARY…RRFVRQHGRD (76 aa)). A helical transmembrane segment spans residues 308–328 (LFACAAAWFLLDIPYYSSTLF). Residues 329-354 (QSQIYRPWFPPAAKVNAFQEAFNVAK) are Extracellular-facing. A helical membrane pass occupies residues 355-375 (FQAVIAVASTIPGYFAAMLLI). Residues 376 to 385 (ERAGRRRLQM) lie on the Cytoplasmic side of the membrane. The chain crosses the membrane as a helical span at residues 386-406 (AGFLLMAVFLFALAGPYDGYW). Residues 407-415 (RDHAKTAGY) lie on the Extracellular side of the membrane. A helical membrane pass occupies residues 416 to 436 (IVLYSLTFFSANLGPNTTTFI). Residues 437-451 (LPAELFPARFRSTCH) are Cytoplasmic-facing. The chain crosses the membrane as a helical span at residues 452–472 (GLSGAAGKLGALVGSIGFLWA). Over 473–485 (SQQKDGAAAGHLP) the chain is Extracellular. A helical membrane pass occupies residues 486–506 (GIGMMYALFVLGGICLLGLAL). The Cytoplasmic segment spans residues 507-582 (TYAFTPETMT…SPILPHRMSL (76 aa)). Residues 519 to 541 (LEENESSVQAQSQVGDGGSDAGN) form a disordered region.

It belongs to the major facilitator superfamily. Phosphate:H(+) symporter (TC 2.A.1.9) family. Expressed at low levels in roots.

It localises to the membrane. High-affinity transporter for external inorganic phosphate. The protein is Probable inorganic phosphate transporter 1-9 (PHT1-9) of Oryza sativa subsp. japonica (Rice).